Consider the following 1497-residue polypeptide: DNA-directed RNA polymerase subunit beta (1497 aa).

The protein belongs to the RNA polymerase beta chain family. As to quaternary structure, the RNAP catalytic core consists of 2 alpha, 1 beta, 1 beta' and 1 omega subunit. When a sigma factor is associated with the core the holoenzyme is formed, which can initiate transcription.

The catalysed reaction is RNA(n) + a ribonucleoside 5'-triphosphate = RNA(n+1) + diphosphate. Functionally, DNA-dependent RNA polymerase catalyzes the transcription of DNA into RNA using the four ribonucleoside triphosphates as substrates. The polypeptide is DNA-directed RNA polymerase subunit beta (Trichlorobacter lovleyi (strain ATCC BAA-1151 / DSM 17278 / SZ) (Geobacter lovleyi)).